Here is a 345-residue protein sequence, read N- to C-terminus: uncharacterized protein (345 aa).

It belongs to the transketolase family. Thiamine diphosphate is required as a cofactor.

This is an uncharacterized protein from Sinorhizobium fredii (strain NBRC 101917 / NGR234).